Reading from the N-terminus, the 217-residue chain is GrpE protein homolog 1, mitochondrial (217 aa).

Residues 1 to 27 (MAARCVRLARGSLPAFALSLRSSPRLL) constitute a mitochondrion transit peptide. Lysine 94 carries the N6-acetyllysine; alternate modification. Lysine 94 bears the N6-succinyllysine; alternate mark. Lysine 100 bears the N6-acetyllysine mark. Lysine 120 is modified (N6-succinyllysine). An N6-acetyllysine; alternate modification is found at lysine 215. Residue lysine 215 is modified to N6-succinyllysine; alternate.

Belongs to the GrpE family. As to quaternary structure, probable component of the PAM complex at least composed of a mitochondrial HSP70 protein, GRPEL1 or GRPEL2, TIMM44, TIMM16/PAM16 and TIMM14/DNAJC19. Binds to HSP70, HSC70 and HSJ1B.

The protein localises to the mitochondrion matrix. In terms of biological role, essential component of the PAM complex, a complex required for the translocation of transit peptide-containing proteins from the inner membrane into the mitochondrial matrix in an ATP-dependent manner. Seems to control the nucleotide-dependent binding of mitochondrial HSP70 to substrate proteins. This Bos taurus (Bovine) protein is GrpE protein homolog 1, mitochondrial (GRPEL1).